Here is a 374-residue protein sequence, read N- to C-terminus: F-box/LRR-repeat protein 8 (374 aa).

The F-box domain maps to 2–48 (AEPGEGLPEEVLALIFRHLSLRDRAAAARVCRAWAAAATCSAVWHDT).

As to quaternary structure, directly interacts with SKP1 and CUL1.

Its function is as follows. Substrate-recognition component of the SCF (SKP1-CUL1-F-box protein)-type E3 ubiquitin ligase complex. This chain is F-box/LRR-repeat protein 8 (FBXL8), found in Homo sapiens (Human).